The primary structure comprises 175 residues: NADH-ubiquinone oxidoreductase chain 6 (175 aa).

Helical transmembrane passes span 1-21 (MMTYIVFILSTVFVVSFVSFS), 25-45 (SPIYGGFGLIVAGGTGCGIVL), 47-67 (FGGSFLGLMVFLIYLGGMLVV), 88-108 (AVLAMFITGVLAELLTACYIL), and 149-169 (YGTWLVVVTGWSLLIGVLVIM).

Belongs to the complex I subunit 6 family. As to quaternary structure, core subunit of respiratory chain NADH dehydrogenase (Complex I) which is composed of 45 different subunits.

It is found in the mitochondrion inner membrane. The enzyme catalyses a ubiquinone + NADH + 5 H(+)(in) = a ubiquinol + NAD(+) + 4 H(+)(out). Core subunit of the mitochondrial membrane respiratory chain NADH dehydrogenase (Complex I) which catalyzes electron transfer from NADH through the respiratory chain, using ubiquinone as an electron acceptor. Essential for the catalytic activity and assembly of complex I. The chain is NADH-ubiquinone oxidoreductase chain 6 (MT-ND6) from Felis catus (Cat).